The primary structure comprises 1465 residues: DNA polymerase III PolC-type (1465 aa).

Residues 427 to 583 enclose the Exonuclease domain; that stretch reads YVVFDVETTG…YDAEATGRLL (157 aa).

This sequence belongs to the DNA polymerase type-C family. PolC subfamily.

Its subcellular location is the cytoplasm. It carries out the reaction DNA(n) + a 2'-deoxyribonucleoside 5'-triphosphate = DNA(n+1) + diphosphate. Its function is as follows. Required for replicative DNA synthesis. This DNA polymerase also exhibits 3' to 5' exonuclease activity. In Streptococcus pyogenes serotype M6 (strain ATCC BAA-946 / MGAS10394), this protein is DNA polymerase III PolC-type.